The chain runs to 182 residues: Large ribosomal subunit protein uL6 (182 aa).

The protein belongs to the universal ribosomal protein uL6 family. In terms of assembly, part of the 50S ribosomal subunit.

Its function is as follows. This protein binds to the 23S rRNA, and is important in its secondary structure. It is located near the subunit interface in the base of the L7/L12 stalk, and near the tRNA binding site of the peptidyltransferase center. The protein is Large ribosomal subunit protein uL6 of Desulforamulus reducens (strain ATCC BAA-1160 / DSM 100696 / MI-1) (Desulfotomaculum reducens).